We begin with the raw amino-acid sequence, 528 residues long: D-3-phosphoglycerate dehydrogenase (528 aa).

Residues 151–152 (RI), Asp171, 230–232 (AAR), and Asp256 each bind NAD(+). Arg232 is an active-site residue. Residue Glu261 is part of the active site. The Proton donor role is filled by His279. 279 to 282 (HLGA) serves as a coordination point for NAD(+). The ACT domain occupies 455–528 (NLVIRYVDQP…ANKLEVVNLS (74 aa)).

The protein belongs to the D-isomer specific 2-hydroxyacid dehydrogenase family.

It catalyses the reaction (2R)-3-phosphoglycerate + NAD(+) = 3-phosphooxypyruvate + NADH + H(+). The catalysed reaction is (R)-2-hydroxyglutarate + NAD(+) = 2-oxoglutarate + NADH + H(+). Its pathway is amino-acid biosynthesis; L-serine biosynthesis; L-serine from 3-phospho-D-glycerate: step 1/3. In terms of biological role, catalyzes the reversible oxidation of 3-phospho-D-glycerate to 3-phosphonooxypyruvate, the first step of the phosphorylated L-serine biosynthesis pathway. Also catalyzes the reversible oxidation of 2-hydroxyglutarate to 2-oxoglutarate. This chain is D-3-phosphoglycerate dehydrogenase (serA), found in Mycobacterium leprae (strain TN).